Reading from the N-terminus, the 178-residue chain is NADH-quinone oxidoreductase subunit B (178 aa).

The [4Fe-4S] cluster site is built by Cys-45, Cys-46, Cys-111, and Cys-140.

The protein belongs to the complex I 20 kDa subunit family. NDH-1 is composed of 15 different subunits. Subunits NuoB, C, D, E, F, and G constitute the peripheral sector of the complex. Requires [4Fe-4S] cluster as cofactor.

It is found in the cell membrane. The catalysed reaction is a quinone + NADH + 5 H(+)(in) = a quinol + NAD(+) + 4 H(+)(out). Its function is as follows. NDH-1 shuttles electrons from NADH, via FMN and iron-sulfur (Fe-S) centers, to quinones in the respiratory chain. The immediate electron acceptor for the enzyme in this species is believed to be a menaquinone. Couples the redox reaction to proton translocation (for every two electrons transferred, four hydrogen ions are translocated across the cytoplasmic membrane), and thus conserves the redox energy in a proton gradient. The sequence is that of NADH-quinone oxidoreductase subunit B from Deinococcus deserti (strain DSM 17065 / CIP 109153 / LMG 22923 / VCD115).